Here is a 248-residue protein sequence, read N- to C-terminus: 3-deoxy-manno-octulosonate cytidylyltransferase (248 aa).

Belongs to the KdsB family.

The protein localises to the cytoplasm. The enzyme catalyses 3-deoxy-alpha-D-manno-oct-2-ulosonate + CTP = CMP-3-deoxy-beta-D-manno-octulosonate + diphosphate. It functions in the pathway nucleotide-sugar biosynthesis; CMP-3-deoxy-D-manno-octulosonate biosynthesis; CMP-3-deoxy-D-manno-octulosonate from 3-deoxy-D-manno-octulosonate and CTP: step 1/1. The protein operates within bacterial outer membrane biogenesis; lipopolysaccharide biosynthesis. In terms of biological role, activates KDO (a required 8-carbon sugar) for incorporation into bacterial lipopolysaccharide in Gram-negative bacteria. In Christiangramia forsetii (strain DSM 17595 / CGMCC 1.15422 / KT0803) (Gramella forsetii), this protein is 3-deoxy-manno-octulosonate cytidylyltransferase.